The primary structure comprises 562 residues: NAD-dependent malic enzyme (562 aa).

The active-site Proton donor is the Tyr101. Position 154 (Arg154) interacts with NAD(+). Lys172 acts as the Proton acceptor in catalysis. A divalent metal cation contacts are provided by Glu243, Asp244, and Asp267. NAD(+) is bound by residues Asp267 and Asn415.

It belongs to the malic enzymes family. In terms of assembly, homotetramer. Mg(2+) is required as a cofactor. Requires Mn(2+) as cofactor.

The enzyme catalyses (S)-malate + NAD(+) = pyruvate + CO2 + NADH. It catalyses the reaction oxaloacetate + H(+) = pyruvate + CO2. The protein is NAD-dependent malic enzyme of Shewanella putrefaciens (strain CN-32 / ATCC BAA-453).